The sequence spans 345 residues: Serpentine receptor class beta-5 (345 aa).

Residues 1 to 22 lie on the Extracellular side of the membrane; sequence MAEINQTKCDLAFQISYHPIYR. The N-linked (GlcNAc...) asparagine glycan is linked to asparagine 5. The helical transmembrane segment at 23–43 threads the bilayer; the sequence is LAQFWTLSVSLLAVPSLLYFL. Residues 44-57 lie on the Cytoplasmic side of the membrane; the sequence is LKRVLLLPFHGNLK. The helical transmembrane segment at 58–78 threads the bilayer; it reads CLLITYFSSIFLYALVLCFDF. Topologically, residues 79 to 103 are extracellular; that stretch reads SYQCLIPFIVTTKCSLIIDQTLYKC. Residues 104–124 form a helical membrane-spanning segment; the sequence is GHMTSLFFLTTPMLLPFGFSI. Residues 125–142 lie on the Cytoplasmic side of the membrane; sequence ERFVAVGMAYKYEKMRTL. The helical transmembrane segment at 143-163 threads the bilayer; it reads LGPILCFILVAPNFVVFYFLF. Residues 164–189 are Extracellular-facing; that stretch reads RDEQFTDSFISFLVLPNTPAVQFNNY. The helical transmembrane segment at 190–210 threads the bilayer; sequence LWFLLYAKIGNFCCNCVLLIF. The Cytoplasmic portion of the chain corresponds to 211–241; it reads HKRFKNTYLKKKTSLSVRYALEEISNSSKFT. A helical membrane pass occupies residues 242 to 262; that stretch reads LILTFTHLVFFGAYTIGSILV. Residues 263 to 280 are Extracellular-facing; it reads RTLGESFFGNFLNFYVAR. A helical transmembrane segment spans residues 281–301; sequence GVNCAVPTYNLLIAFVGLISL. Topologically, residues 302-345 are cytoplasmic; it reads RQLNSRRHAKILTKVLIRVTGQEGARNYDDIIMQQWNTVSNRTR.

This sequence belongs to the nematode receptor-like protein srb family. As to expression, expressed throughout the head.

The protein resides in the cell membrane. The protein localises to the perikaryon. Its subcellular location is the cell projection. It localises to the dendrite. Its function is as follows. G-protein coupled receptor. Plays a role in the navigational capacity of sperm and promotes the targeting of sperm derived from males to the fertilization site in the uterus of hermaphrodites. This is Serpentine receptor class beta-5 from Caenorhabditis elegans.